A 418-amino-acid chain; its full sequence is Protein fuzzy homolog (418 aa).

It belongs to the fuzzy family. As to quaternary structure, interacts with rsg1. Interacts with intu and wdpcp; fuz, intu and wdpcp probably form the core CPLANE (ciliogenesis and planar polarity effectors) complex.

It is found in the cytoplasm. Its subcellular location is the cytoskeleton. The protein localises to the cilium basal body. Functionally, probable planar cell polarity effector involved in cilium biogenesis. Proposed to function as core component of the CPLANE (ciliogenesis and planar polarity effectors) complex involved in the recruitment of peripheral IFT-A proteins to basal bodies. May regulate protein and membrane transport to the cilium. May control the organization of the apical actin cytoskeleton, which is essential for the normal orientation of elongating ciliary microtubules. The sequence is that of Protein fuzzy homolog (fuz) from Xenopus tropicalis (Western clawed frog).